The following is a 62-amino-acid chain: MTIAFQLAVFALIITSSILLISVPVVFASPDGWSSNKNVVFSGTSLWIGLVFLVGILNSLIS.

2 helical membrane-spanning segments follow: residues 8-28 (AVFA…VVFA) and 41-61 (FSGT…NSLI).

This sequence belongs to the PsbZ family. As to quaternary structure, PSII is composed of 1 copy each of membrane proteins PsbA, PsbB, PsbC, PsbD, PsbE, PsbF, PsbH, PsbI, PsbJ, PsbK, PsbL, PsbM, PsbT, PsbY, PsbZ, Psb30/Ycf12, at least 3 peripheral proteins of the oxygen-evolving complex and a large number of cofactors. It forms dimeric complexes.

It is found in the plastid. It localises to the chloroplast thylakoid membrane. Its function is as follows. May control the interaction of photosystem II (PSII) cores with the light-harvesting antenna, regulates electron flow through the 2 photosystem reaction centers. PSII is a light-driven water plastoquinone oxidoreductase, using light energy to abstract electrons from H(2)O, generating a proton gradient subsequently used for ATP formation. This is Photosystem II reaction center protein Z from Arabidopsis thaliana (Mouse-ear cress).